We begin with the raw amino-acid sequence, 527 residues long: ATP-dependent RNA helicase DBP3 (527 aa).

The span at 1–11 (MSKDHKDKKRK) shows a compositional bias: basic residues. Residues 1 to 89 (MSKDHKDKKR…TGYSQSPALT (89 aa)) form a disordered region. A compositionally biased stretch (basic and acidic residues) spans 12–24 (HSDEATEEVEKKT). The span at 25-44 (KVSKKEKKDKKEKKEKKDKK) shows a compositional bias: basic residues. Over residues 45-71 (EKKDKSEKKDKSEKKEKKEKKESEDVP) the composition is skewed to basic and acidic residues. The span at 72–89 (TKSSAVVSTGYSQSPALT) shows a compositional bias: polar residues. Residues 119–145 (LGFDQIDLDSRIASVISKFPTPTPIQA) carry the Q motif motif. Residues 148-319 (WPYLLSGKDV…STFMNSPVKV (172 aa)) enclose the Helicase ATP-binding domain. 161–168 (AETGSGKT) contacts ATP. Residues 266–269 (DEAD) carry the DEAD box motif. A Helicase C-terminal domain is found at 348 to 497 (KLLSLLRKYQ…PVPDELLKFG (150 aa)).

Belongs to the DEAD box helicase family. DDX5/DBP2 subfamily.

Its subcellular location is the nucleus. It localises to the nucleolus. It carries out the reaction ATP + H2O = ADP + phosphate + H(+). ATP-dependent RNA helicase required for 60S ribosomal subunit synthesis. Involved in efficient pre-rRNA processing, predominantly at site A3, which is necessary for the normal formation of 25S and 5.8S rRNAs. This is ATP-dependent RNA helicase DBP3 (DBP3) from Debaryomyces hansenii (strain ATCC 36239 / CBS 767 / BCRC 21394 / JCM 1990 / NBRC 0083 / IGC 2968) (Yeast).